Reading from the N-terminus, the 296-residue chain is Endochitinase 3 (296 aa).

A GH18 domain is found at 12-296; it reads HKLTVYWGAE…VKNGQLPEED (285 aa). Residues Asn32 and Asn152 are each glycosylated (N-linked (GlcNAc...) asparagine). The active-site Proton donor is Glu153. An N-linked (GlcNAc...) asparagine glycan is attached at Asn228.

The protein belongs to the glycosyl hydrolase 18 family. Chitinase class III subfamily.

The protein resides in the secreted. It carries out the reaction Random endo-hydrolysis of N-acetyl-beta-D-glucosaminide (1-&gt;4)-beta-linkages in chitin and chitodextrins.. Secreted chitinase involved in the degradation of chitin, a component of the cell walls of fungi and exoskeletal elements of some animals (including worms and arthropods). Participates in the infection process and directly acts in the penetration process of the host cuticle. Involved in heat-shock adaptation. The polypeptide is Endochitinase 3 (chi3) (Metarhizium anisopliae (Entomophthora anisopliae)).